The following is a 467-amino-acid chain: Venom serine carboxypeptidase (467 aa).

The signal sequence occupies residues 1–18 (MKKLVLLQFLFFISFARG). Residues Asn130 and Asn169 are each glycosylated (N-linked (GlcNAc...) asparagine). Residue Ser202 is part of the active site. N-linked (GlcNAc...) asparagine glycosylation is found at Asn304, Asn322, and Asn344. Catalysis depends on residues Asp387 and His444.

It belongs to the peptidase S10 family. As to expression, expressed by the venom duct.

The protein localises to the secreted. It catalyses the reaction Release of a C-terminal amino acid with broad specificity.. The protein is Venom serine carboxypeptidase of Apis mellifera (Honeybee).